Here is a 320-residue protein sequence, read N- to C-terminus: Cytochrome f (320 aa).

The signal sequence occupies residues 1–35; sequence MQTRNTFSWIREEITRSISVSLMIYIITWASISGA. Residues Y36, C56, C59, and H60 each coordinate heme. Residues 286 to 306 traverse the membrane as a helical segment; sequence VQGLLFFLGSVVLAQIFLVLK.

Belongs to the cytochrome f family. The 4 large subunits of the cytochrome b6-f complex are cytochrome b6, subunit IV (17 kDa polypeptide, petD), cytochrome f and the Rieske protein, while the 4 small subunits are PetG, PetL, PetM and PetN. The complex functions as a dimer. The cofactor is heme.

It is found in the plastid. Its subcellular location is the chloroplast thylakoid membrane. Functionally, component of the cytochrome b6-f complex, which mediates electron transfer between photosystem II (PSII) and photosystem I (PSI), cyclic electron flow around PSI, and state transitions. The sequence is that of Cytochrome f from Capsella bursa-pastoris (Shepherd's purse).